Consider the following 144-residue polypeptide: uncharacterized protein (144 aa).

Residues 1 to 24 (MGKVIQFPFGEEPEKKEEKELKTE) form a disordered region. The segment covering 12 to 24 (EPEKKEEKELKTE) has biased composition (basic and acidic residues).

This is an uncharacterized protein from Aquifex aeolicus (strain VF5).